We begin with the raw amino-acid sequence, 137 residues long: Protein BNS1 (137 aa).

Functionally, component of the FEAR (CDC14 early anaphase release) network which promotes CDC14 release from the nucleolus during early anaphase and is required for the efficient segregation of telomeric and nucleolar regions. Although BNS1 can partially compensate for a lack of SPO12 function when overexpressed, it does not appear to play any role in controlling meiotic nuclear division. The polypeptide is Protein BNS1 (BNS1) (Saccharomyces cerevisiae (strain ATCC 204508 / S288c) (Baker's yeast)).